The primary structure comprises 323 residues: Lipoyl synthase (323 aa).

A compositionally biased stretch (basic and acidic residues) spans 1-14 (MVTILDRTKPDDKR). The interval 1-25 (MVTILDRTKPDDKRIRHPEKAHKPD) is disordered. Residues Cys-61, Cys-66, Cys-72, Cys-87, Cys-91, Cys-94, and Ser-300 each contribute to the [4Fe-4S] cluster site. The Radical SAM core domain occupies 73 to 289 (WEKKHATFMI…EDIAYTKGFL (217 aa)).

The protein belongs to the radical SAM superfamily. Lipoyl synthase family. It depends on [4Fe-4S] cluster as a cofactor.

The protein resides in the cytoplasm. The enzyme catalyses [[Fe-S] cluster scaffold protein carrying a second [4Fe-4S](2+) cluster] + N(6)-octanoyl-L-lysyl-[protein] + 2 oxidized [2Fe-2S]-[ferredoxin] + 2 S-adenosyl-L-methionine + 4 H(+) = [[Fe-S] cluster scaffold protein] + N(6)-[(R)-dihydrolipoyl]-L-lysyl-[protein] + 4 Fe(3+) + 2 hydrogen sulfide + 2 5'-deoxyadenosine + 2 L-methionine + 2 reduced [2Fe-2S]-[ferredoxin]. Its pathway is protein modification; protein lipoylation via endogenous pathway; protein N(6)-(lipoyl)lysine from octanoyl-[acyl-carrier-protein]: step 2/2. Functionally, catalyzes the radical-mediated insertion of two sulfur atoms into the C-6 and C-8 positions of the octanoyl moiety bound to the lipoyl domains of lipoate-dependent enzymes, thereby converting the octanoylated domains into lipoylated derivatives. This chain is Lipoyl synthase, found in Allorhizobium ampelinum (strain ATCC BAA-846 / DSM 112012 / S4) (Agrobacterium vitis (strain S4)).